The chain runs to 202 residues: Alpha-1-acid glycoprotein (202 aa).

Positions 1-18 are cleaved as a signal peptide; sequence MALLWALAVLSHLPLLDA. N34, N57, N94, N104, and N136 each carry an N-linked (GlcNAc...) asparagine glycan. C91 and C184 are disulfide-bonded.

Belongs to the calycin superfamily. Lipocalin family.

It localises to the secreted. In terms of biological role, functions as a transport protein in the blood stream. Binds various ligands in the interior of its beta-barrel domain. Appears to function in modulating the activity of the immune system during the acute-phase reaction. This chain is Alpha-1-acid glycoprotein (ORM1), found in Bos taurus (Bovine).